Here is a 975-residue protein sequence, read N- to C-terminus: Glycine dehydrogenase (decarboxylating) (975 aa).

N6-(pyridoxal phosphate)lysine is present on lysine 723.

This sequence belongs to the GcvP family. In terms of assembly, the glycine cleavage system is composed of four proteins: P, T, L and H. The cofactor is pyridoxal 5'-phosphate.

It catalyses the reaction N(6)-[(R)-lipoyl]-L-lysyl-[glycine-cleavage complex H protein] + glycine + H(+) = N(6)-[(R)-S(8)-aminomethyldihydrolipoyl]-L-lysyl-[glycine-cleavage complex H protein] + CO2. In terms of biological role, the glycine cleavage system catalyzes the degradation of glycine. The P protein binds the alpha-amino group of glycine through its pyridoxal phosphate cofactor; CO(2) is released and the remaining methylamine moiety is then transferred to the lipoamide cofactor of the H protein. In Burkholderia lata (strain ATCC 17760 / DSM 23089 / LMG 22485 / NCIMB 9086 / R18194 / 383), this protein is Glycine dehydrogenase (decarboxylating).